The following is a 333-amino-acid chain: Phosphoenolpyruvate transferase (333 aa).

7,8-didemethyl-8-hydroxy-5-deazariboflavin is bound at residue Asp65.

The protein belongs to the CofD family. As to quaternary structure, homodimer. It depends on Mg(2+) as a cofactor.

It carries out the reaction enolpyruvoyl-2-diphospho-5'-guanosine + 7,8-didemethyl-8-hydroxy-5-deazariboflavin = dehydro coenzyme F420-0 + GMP + H(+). It participates in cofactor biosynthesis; coenzyme F420 biosynthesis. Catalyzes the transfer of the phosphoenolpyruvate moiety from enoylpyruvoyl-2-diphospho-5'-guanosine (EPPG) to 7,8-didemethyl-8-hydroxy-5-deazariboflavin (FO) with the formation of dehydro coenzyme F420-0 and GMP. The protein is Phosphoenolpyruvate transferase of Mycobacterium leprae (strain TN).